The primary structure comprises 192 residues: UPF0312 protein Spro_1887 (192 aa).

The first 23 residues, 1-23, serve as a signal peptide directing secretion; it reads MLKKTVLGLTAGAMLLSAGSALA.

Belongs to the UPF0312 family. Type 1 subfamily.

The protein resides in the periplasm. The sequence is that of UPF0312 protein Spro_1887 from Serratia proteamaculans (strain 568).